The sequence spans 598 residues: MKNIRNFSIIAHIDHGKSTLSDRIIQICGGLTDREMAAQVLDSMDLERERGITIKAQSVTLNYTADDGEVYQLNFIDTPGHVDFSYEVSRSLAACEGALLVVDAGQGVEAQTLANCYTAIDMDLTVVPVLNKIDLPAAEPERVAEEIEDIVGIDATDAVRCSAKTGVGVKEVIERLVKEIPAPEGDPDAPLQALIIDSWFDNYLGVVSLIRIKNGKVNKGDKIKVMSTGQVYNIDRIGIFTPKQVDTTSLSCGEVGWVVCGIKDILGAPVGDTLTAAQKPADKPLPGFKKVKPQVYAGLFPVSSDDYESFRDALGKLSLNDASLFYEPESSSALGFGFRCGFLGLLHMEIIQERLEREYDLDLITTAPTVVYEVEMTNGDIIMVDSPSKLPALNNIEEIREPIAECHMLLPQEYLGNVITLCVEKRGVQTNMVYHGNQVSLTYEIPMAEVVLDFFDRLKSTSRGYASLDYNFLRFQGSNMVRVDVLINGERVDALALITHNDNAPYRGRELVEKMKEFIPRQQFDIAIQAAIGNHIIARSTVKQLRKNVLAKCYGGDVSRKKKLLQKQKEGKKRMKQIGNVELPQEAFLAILHVGKDK.

The 183-residue stretch at 2-184 folds into the tr-type G domain; it reads KNIRNFSIIA…RLVKEIPAPE (183 aa). GTP-binding positions include 14–19 and 131–134; these read DHGKST and NKID.

It belongs to the TRAFAC class translation factor GTPase superfamily. Classic translation factor GTPase family. LepA subfamily.

The protein resides in the cell inner membrane. It catalyses the reaction GTP + H2O = GDP + phosphate + H(+). Its function is as follows. Required for accurate and efficient protein synthesis under certain stress conditions. May act as a fidelity factor of the translation reaction, by catalyzing a one-codon backward translocation of tRNAs on improperly translocated ribosomes. Back-translocation proceeds from a post-translocation (POST) complex to a pre-translocation (PRE) complex, thus giving elongation factor G a second chance to translocate the tRNAs correctly. Binds to ribosomes in a GTP-dependent manner. In Proteus mirabilis (strain HI4320), this protein is Elongation factor 4.